The following is a 30-amino-acid chain: Mejucin (30 aa).

The protein localises to the secreted. Bacteriocin that inhibits the growth of several Gram-positive bacteria, especially the food-borne pathogens L.monocytogenes, B.cereus strain ATCC 11778, B.cereus strain ATCC 21366, B.cereus strain ATCC 10876 and B.cereus strain ATCC 14579. Likely to act by disrupting the pathogen membrane resulting in leakage of intracellular constituents. Does not inhibit the growth of Gram-negative bacteria. This Bacillus subtilis protein is Mejucin.